A 620-amino-acid chain; its full sequence is Glutathione-regulated potassium-efflux system protein KefC (620 aa).

The next 12 helical transmembrane spans lie at 4 to 24 (HTLL…PIAV), 26 to 46 (LGLG…PWGL), 54 to 74 (SILH…GLEL), 90 to 110 (GALQ…FLGL), 114 to 134 (VAEL…MQAM), 149 to 169 (FAVL…IPLL), 178 to 198 (LGAF…VVVL), 218 to 238 (VFSA…EEVG), 270 to 290 (GLLL…GTLV), 294 to 314 (LRIL…LWLV), 327 to 347 (WFAV…GAAQ), and 359 to 379 (ALTL…VLLT). The region spanning 399–518 (QPRVIVAGFG…AGVAMPERET (120 aa)) is the RCK N-terminal domain. The segment at 599-620 (QGTAEGKHSGEVADEPEVKPSI) is disordered.

This sequence belongs to the monovalent cation:proton antiporter 2 (CPA2) transporter (TC 2.A.37) family. KefC subfamily. In terms of assembly, homodimer. Interacts with the regulatory subunit KefF.

The protein resides in the cell inner membrane. Its function is as follows. Pore-forming subunit of a potassium efflux system that confers protection against electrophiles. Catalyzes K(+)/H(+) antiport. The protein is Glutathione-regulated potassium-efflux system protein KefC of Salmonella paratyphi B (strain ATCC BAA-1250 / SPB7).